The chain runs to 254 residues: Probable electron transfer flavoprotein subunit beta (254 aa).

The protein belongs to the ETF beta-subunit/FixA family. In terms of assembly, heterodimer of an alpha and a beta subunit. The cofactor is FAD. It depends on AMP as a cofactor.

The protein localises to the mitochondrion matrix. Its function is as follows. The electron transfer flavoprotein serves as a specific electron acceptor for several dehydrogenases, including five acyl-CoA dehydrogenases, glutaryl-CoA and sarcosine dehydrogenase. It transfers the electrons to the main mitochondrial respiratory chain via ETF-ubiquinone oxidoreductase (ETF dehydrogenase). The sequence is that of Probable electron transfer flavoprotein subunit beta from Schizosaccharomyces pombe (strain 972 / ATCC 24843) (Fission yeast).